We begin with the raw amino-acid sequence, 125 residues long: Large ribosomal subunit protein bL12 (125 aa).

This sequence belongs to the bacterial ribosomal protein bL12 family. In terms of assembly, homodimer. Part of the ribosomal stalk of the 50S ribosomal subunit. Forms a multimeric L10(L12)X complex, where L10 forms an elongated spine to which 2 to 4 L12 dimers bind in a sequential fashion. Binds GTP-bound translation factors.

Forms part of the ribosomal stalk which helps the ribosome interact with GTP-bound translation factors. Is thus essential for accurate translation. This Parabacteroides distasonis (strain ATCC 8503 / DSM 20701 / CIP 104284 / JCM 5825 / NCTC 11152) protein is Large ribosomal subunit protein bL12.